A 230-amino-acid chain; its full sequence is RING finger protein 141 (230 aa).

G2 is lipidated: N-myristoyl glycine. The RING-type zinc-finger motif lies at 155–192; the sequence is CCICMDGRADLILPCAHSFCQKCIDKWSDRHRNCPICR.

In terms of tissue distribution, isoform 1 is testis-specific. Isoform 2 is expressed in heart, brain, skeletal muscle, kidney, pancreas, lung, liver and testis. Isoform 3 is expressed in heart, liver, and kidney.

Its subcellular location is the membrane. May be involved in spermatogenesis. This Mus musculus (Mouse) protein is RING finger protein 141 (Rnf141).